The primary structure comprises 556 residues: CDP-diacylglycerol--glycerol-3-phosphate 3-phosphatidyltransferase, mitochondrial (556 aa).

The transit peptide at methionine 1–alanine 28 directs the protein to the mitochondrion. Phosphoserine is present on serine 49. Alanine 124–glycine 131 provides a ligand contact to ATP. PLD phosphodiesterase domains lie at threonine 215–tyrosine 241 and arginine 460–serine 493. Active-site residues include histidine 220, lysine 222, and aspartate 227.

It belongs to the CDP-alcohol phosphatidyltransferase class-II family.

It localises to the mitochondrion. It catalyses the reaction a CDP-1,2-diacyl-sn-glycerol + sn-glycerol 3-phosphate = a 1,2-diacyl-sn-glycero-3-phospho-(1'-sn-glycero-3'-phosphate) + CMP + H(+). Its pathway is phospholipid metabolism; phosphatidylglycerol biosynthesis; phosphatidylglycerol from CDP-diacylglycerol: step 1/2. With respect to regulation, activated by calcium and magnesium and inhibited by other bivalent cations. Functions in the biosynthesis of the anionic phospholipids phosphatidylglycerol and cardiolipin. The chain is CDP-diacylglycerol--glycerol-3-phosphate 3-phosphatidyltransferase, mitochondrial (PGS1) from Homo sapiens (Human).